A 638-amino-acid chain; its full sequence is Phosphomethylpyrimidine synthase (638 aa).

Residues N243, M272, Y301, H337, S357–G359, D398–R401, and E437 each bind substrate. H441 is a binding site for Zn(2+). Y464 provides a ligand contact to substrate. H505 provides a ligand contact to Zn(2+). [4Fe-4S] cluster contacts are provided by C585, C588, and C593.

It belongs to the ThiC family. In terms of assembly, homodimer. The cofactor is [4Fe-4S] cluster.

It carries out the reaction 5-amino-1-(5-phospho-beta-D-ribosyl)imidazole + S-adenosyl-L-methionine = 4-amino-2-methyl-5-(phosphooxymethyl)pyrimidine + CO + 5'-deoxyadenosine + formate + L-methionine + 3 H(+). Its pathway is cofactor biosynthesis; thiamine diphosphate biosynthesis. Catalyzes the synthesis of the hydroxymethylpyrimidine phosphate (HMP-P) moiety of thiamine from aminoimidazole ribotide (AIR) in a radical S-adenosyl-L-methionine (SAM)-dependent reaction. In Dechloromonas aromatica (strain RCB), this protein is Phosphomethylpyrimidine synthase.